Here is a 132-residue protein sequence, read N- to C-terminus: Small ribosomal subunit protein uS11 (132 aa).

This sequence belongs to the universal ribosomal protein uS11 family. In terms of assembly, part of the 30S ribosomal subunit. Interacts with proteins S7 and S18. Binds to IF-3.

Located on the platform of the 30S subunit, it bridges several disparate RNA helices of the 16S rRNA. Forms part of the Shine-Dalgarno cleft in the 70S ribosome. This is Small ribosomal subunit protein uS11 from Alkaliphilus metalliredigens (strain QYMF).